The following is a 1247-amino-acid chain: Nidogen-1 (1247 aa).

The N-terminal stretch at 1 to 28 (MLASSSRIRAAWTRALLLPLLLAGPVGC) is a signal peptide. The 163-residue stretch at 106–268 (PFLADLDTTD…GVWVFEIGSP (163 aa)) folds into the NIDO domain. Residues tyrosine 289 and tyrosine 296 each carry the sulfotyrosine modification. The EGF-like 1 domain occupies 386-426 (SRQTCANNRHQCSVHAECRDYATGFCCSCVAGYTGNGRQCV). Intrachain disulfides connect cysteine 390/cysteine 403, cysteine 397/cysteine 412, cysteine 411/cysteine 618, cysteine 414/cysteine 425, cysteine 672/cysteine 685, cysteine 679/cysteine 695, cysteine 697/cysteine 708, cysteine 714/cysteine 727, cysteine 721/cysteine 736, cysteine 738/cysteine 750, cysteine 762/cysteine 777, cysteine 769/cysteine 787, cysteine 789/cysteine 800, cysteine 806/cysteine 817, cysteine 811/cysteine 826, cysteine 828/cysteine 839, cysteine 849/cysteine 878, cysteine 889/cysteine 896, and cysteine 898/cysteine 919. The 238-residue stretch at 430–667 (SPQRVNGKVK…GPVREGSPDA (238 aa)) folds into the Nidogen G2 beta-barrel domain. One can recognise an EGF-like 2 domain in the interval 668-709 (LQNPCYIGTHGCDTNAACRPGPRTQFTCECSIGFRGDGRTCY). The Cell attachment site motif lies at 702–704 (RGD). An EGF-like 3; calcium-binding domain is found at 710 to 751 (DIDECSEQPSVCGSHTICNNHPGTFRCECVEGYQFSDEGTCV). The EGF-like 4 domain maps to 758–801 (PINYCETGLHNCDIPQRAQCIYTGGSSYTCSCLPGFSGDGQACQ). In terms of domain architecture, EGF-like 5; calcium-binding spans 802 to 840 (DVDECQPSRCHPDAFCYNTPGSFTCQCKPGYQGDGFRCV). In terms of domain architecture, Thyroglobulin type-1 spans 846–919 (KTRCQHEREH…RTRPGMTPPC (74 aa)). O-linked (GalNAc...) threonine glycosylation is found at threonine 922 and threonine 935. 4 LDL-receptor class B repeats span residues 990-1032 (KMVY…DHLG), 1033-1075 (RNIF…DSVR), 1076-1120 (GNLY…DAFS), and 1121-1162 (SQLC…YGKN). An EGF-like 6 domain is found at 1208-1244 (GHNYCSVNNGGCTHLCLATPGSRTCRCPDNTLGVDCI). 3 cysteine pairs are disulfide-bonded: cysteine 1212/cysteine 1223, cysteine 1219/cysteine 1232, and cysteine 1234/cysteine 1243.

As to quaternary structure, interacts with FBLN1. Interacts with LGALS3BP. Interacts with PLXDC1. Interacts with SVEP1. N- and O-glycosylated.

The protein resides in the secreted. It localises to the extracellular space. The protein localises to the extracellular matrix. It is found in the basement membrane. In terms of biological role, sulfated glycoprotein widely distributed in basement membranes and tightly associated with laminin. Also binds to collagen IV and perlecan. It probably has a role in cell-extracellular matrix interactions. This is Nidogen-1 (NID1) from Homo sapiens (Human).